Reading from the N-terminus, the 1555-residue chain is Pre-mRNA cleavage complex 2 protein Pcf11 (1555 aa).

An N-acetylserine modification is found at Ser-2. The CID domain occupies 14 to 142 (AREDACRDYQ…ALDVRVNSLD (129 aa)). Ser-120 carries the phosphoserine; by WNK1 modification. Thr-121 carries the post-translational modification Phosphothreonine; by WNK1. A disordered region spans residues 167 to 186 (NKSPEEPSTPGTVVSSPSIS). A phosphoserine mark is found at Ser-169 and Ser-182. Low complexity predominate over residues 174–186 (STPGTVVSSPSIS). Positions 202-239 (QLIRQQLLAKQKQLLELQQKKLELELEQAKAQLAVSLS) form a coiled coil. A disordered region spans residues 266–648 (VKAPHQVPVQ…QQQHRLSVDA (383 aa)). Lys-291 participates in a covalent cross-link: Glycyl lysine isopeptide (Lys-Gly) (interchain with G-Cter in SUMO2). A compositionally biased stretch (basic and acidic residues) spans 307-317 (HGKDQSHRKEF). A compositionally biased stretch (polar residues) spans 320-333 (NTLNQSDTKTSKTI). Residue Lys-328 forms a Glycyl lysine isopeptide (Lys-Gly) (interchain with G-Cter in SUMO2) linkage. 3 stretches are compositionally biased toward basic and acidic residues: residues 342–364 (KQEK…DSKS), 380–421 (HTKD…DVKE), and 427–442 (EKKD…EHRL). Lys-456 is covalently cross-linked (Glycyl lysine isopeptide (Lys-Gly) (interchain with G-Cter in SUMO2)). Thr-459 is subject to Phosphothreonine. Positions 475 to 486 (STRKRSRSRSPK) are enriched in basic residues. A phosphoserine mark is found at Ser-489, Ser-494, Ser-509, and Ser-511. Basic residues predominate over residues 494–508 (SPKRRDRRSPKRRQR). Basic and acidic residues predominate over residues 529–567 (SHMEEFTPPSREDRNAKRSTKQDIRDPRRMKKTEEERPQ). The segment covering 568 to 578 (ETTNQHSTKSG) has biased composition (polar residues). Residues 599–615 (SGWEENKSLQQVDEHSK) show a composition bias toward basic and acidic residues. Residue Ser-645 is modified to Phosphoserine. A Glycyl lysine isopeptide (Lys-Gly) (interchain with G-Cter in SUMO2) cross-link involves residue Lys-654. Ser-705 is subject to Phosphoserine. Disordered regions lie at residues 707-732 (FNDR…PASR) and 749-781 (RPLF…PRID). Positions 716-725 (PRYEDSDKPF) are enriched in basic and acidic residues. Lys-723 is covalently cross-linked (Glycyl lysine isopeptide (Lys-Gly) (interchain with G-Cter in SUMO2)). Residues Ser-728 and Ser-777 each carry the phosphoserine modification. Thr-785 carries the post-translational modification Phosphothreonine. The residue at position 794 (Ser-794) is a Phosphoserine. Asymmetric dimethylarginine is present on residues Arg-805, Arg-820, and Arg-833. At Ser-851 the chain carries Phosphoserine. Asymmetric dimethylarginine is present on residues Arg-929, Arg-942, Arg-955, Arg-981, Arg-994, and Arg-1007. The disordered stretch occupies residues 1056–1081 (HGQPGPRFERTPGQPGPQRFDGPPGQ). Asymmetric dimethylarginine occurs at positions 1093 and 1104. Disordered stretches follow at residues 1127–1147 (VSFN…NAPS) and 1159–1187 (FDSP…RASG). At Ser-1161 the chain carries Phosphoserine. Residues 1162 to 1175 (PQGPNFNGPHGPGN) show a composition bias toward low complexity. Residue Lys-1278 forms a Glycyl lysine isopeptide (Lys-Gly) (interchain with G-Cter in SUMO2) linkage. The span at 1289-1298 (SATTQVSEVT) shows a compositional bias: polar residues. The segment at 1289–1315 (SATTQVSEVTAQPPPEEEEDQNEDQDV) is disordered. Residues 1303–1315 (PEEEEDQNEDQDV) show a composition bias toward acidic residues. Glycyl lysine isopeptide (Lys-Gly) (interchain with G-Cter in SUMO2) cross-links involve residues Lys-1419, Lys-1511, and Lys-1524. The interval 1516–1555 (EPCDSPKVKEERIDTPPACTEESIATPSEIKTENDTVESV) is disordered. Positions 1519–1529 (DSPKVKEERID) are enriched in basic and acidic residues. A Phosphothreonine modification is found at Thr-1530. Lys-1546 is covalently cross-linked (Glycyl lysine isopeptide (Lys-Gly) (interchain with G-Cter in SUMO2)).

In terms of assembly, associates with the phosphorylated CTD domain of POLR2A /RNA polymerase II. Post-translationally, phosphorylation at Ser-120 and/or Thr-121 by WNK1 weakens its association with POLR2A/RNA polymerase II, promoting transcript release from the chromatin template and mRNA export to the cytoplasm.

The protein localises to the nucleus. In terms of biological role, component of pre-mRNA cleavage complex II, which promotes transcription termination by RNA polymerase II. The protein is Pre-mRNA cleavage complex 2 protein Pcf11 of Homo sapiens (Human).